The chain runs to 1099 residues: ATP-dependent helicase/deoxyribonuclease subunit B (1099 aa).

Cysteine 766, cysteine 1056, cysteine 1059, and cysteine 1065 together coordinate [4Fe-4S] cluster.

This sequence belongs to the helicase family. AddB/RexB type 2 subfamily. Heterodimer of AddA and RexB. Requires Mg(2+) as cofactor. It depends on [4Fe-4S] cluster as a cofactor.

In terms of biological role, the heterodimer acts as both an ATP-dependent DNA helicase and an ATP-dependent, dual-direction single-stranded exonuclease. Recognizes the chi site generating a DNA molecule suitable for the initiation of homologous recombination. This subunit has 5' -&gt; 3' nuclease activity but not helicase activity. The sequence is that of ATP-dependent helicase/deoxyribonuclease subunit B from Lactococcus lactis subsp. cremoris (strain SK11).